The sequence spans 4456 residues: Dynein axonemal heavy chain 2 (4456 aa).

The segment covering 1–12 has biased composition (basic residues); it reads MASKAEKKRKVA. A disordered region spans residues 1–55; sequence MASKAEKKRKVAGRGGARAGRVVRAPQSTAGPGATEASLLPDGQEPEPESGKEDS. The segment at 1–1795 is stem; the sequence is MASKAEKKRK…RQTNTQFQYG (1795 aa). Residues 1218–1274 adopt a coiled-coil conformation; sequence LDQIAQMRAMLMAMRDEENNLRSNLGIFKIEQPVSKDLQILEKELDALQQVWEITRD. One copy of the TPR 1 repeat lies at 1439 to 1474; the sequence is EDNQVALSTMKASRFVKAFEKDVDHWERCLSLILEV. AAA stretches follow at residues 1794–2015, 2075–2302, 2407–2654, and 2751–3003; these read YGYE…LLRY, DTIE…DNCN, RYPP…VFQG, and EYNL…LRRY. Residues 1832–1839, 2113–2120, and 2445–2452 each bind ATP; these read GPAGTGKT, GGTGSSKT, and GPVGTGKT. The TPR 2 repeat unit spans residues 2750 to 2783; the sequence is NEYNLSPSVVPMQLVLFREAIEHITRIVRVIGQP. 2791–2798 contacts ATP; the sequence is GIGGSGRQ. The stalk stretch occupies residues 3018–3301; it reads YKKLLGEKRQ…EELRKKSEEM (284 aa). Positions 3041–3078 form a coiled coil; it reads FKIDETREKVEVMSLELEDAKKKVAEFQKQCEEYLVII. Residues 3101-3134 form a TPR 3 repeat; sequence IEEVKCQALADNAQKDLEEALPALEEAMRALESL. Coiled coils occupy residues 3245–3333 and 3552–3596; these read KRIR…EEDL and VRKE…GSLL. 2 AAA regions span residues 3387-3617 and 3833-4052; these read LTNP…EVTE and VTSF…LLSL. TPR repeat units follow at residues 4101 to 4134 and 4135 to 4169; these read TTPF…LPSM and DPPE…QPQI.

This sequence belongs to the dynein heavy chain family. As to quaternary structure, part of the axonemal inner dynein arm complex that consists of at least two heavy chains and a number of intermediate and light chains. Interacts with DNAI4.

It is found in the cytoplasm. The protein resides in the cytoskeleton. It localises to the cilium axoneme. Its subcellular location is the flagellum axoneme. Functionally, as part of the axonemal inner dynein arm complex plays a central role in ciliary beat. Expressed in sperm flagellum, it is required for sperm motility. Dyneins are microtubule-based molecular motors possessing ATPase activities that can convert the chemical energy of ATP into relative sliding between adjacent microtubule doublets to generate ciliary bending. This Mus musculus (Mouse) protein is Dynein axonemal heavy chain 2.